Here is a 439-residue protein sequence, read N- to C-terminus: Proline--tRNA ligase (439 aa).

This sequence belongs to the class-II aminoacyl-tRNA synthetase family. ProS type 2 subfamily. As to quaternary structure, homodimer.

The protein localises to the cytoplasm. The enzyme catalyses tRNA(Pro) + L-proline + ATP = L-prolyl-tRNA(Pro) + AMP + diphosphate. Its function is as follows. Catalyzes the attachment of proline to tRNA(Pro) in a two-step reaction: proline is first activated by ATP to form Pro-AMP and then transferred to the acceptor end of tRNA(Pro). This is Proline--tRNA ligase from Rhodopseudomonas palustris (strain BisA53).